Here is an 803-residue protein sequence, read N- to C-terminus: Mastermind-like domain-containing protein 1 (803 aa).

4 disordered regions span residues 22–50 (NRQE…TGMA), 292–374 (LAAS…APSS), 420–452 (GHLI…QQSF), and 486–641 (QQQQ…PDQS). Over residues 296-309 (KQGSATKQGSNRNW) the composition is skewed to polar residues. Residues 312-340 (LPPPGLSPPYLPVPSPHPPPPQPPPPPFS) show a composition bias toward pro residues. A compositionally biased stretch (low complexity) spans 347-362 (SCMSSSSLSGSAVQSS). Composition is skewed to polar residues over residues 363-374 (PNALLSSMAPSS), 441-452 (NLSSPGLPQQSF), 495-526 (HQAN…SSSP), and 547-564 (PSPQ…QSSL). Positions 571 to 588 (ATPAHAPSATASSTATAT) are enriched in low complexity. Basic residues predominate over residues 592-622 (QHHHQQHHHQQHHHQQQHHQQQHHQQHHHQQ). The segment covering 623-641 (QQHQQQQHQQQQQQQPDQS) has biased composition (low complexity).

The protein belongs to the mastermind family.

Its subcellular location is the nucleus. Transactivates the HES3 promoter independently of NOTCH proteins. HES3 is a non-canonical NOTCH target gene which lacks binding sites for RBPJ. Required for testosterone production. The sequence is that of Mastermind-like domain-containing protein 1 (Mamld1) from Mus musculus (Mouse).